Here is a 1681-residue protein sequence, read N- to C-terminus: MARIFKFFVFLLIVFISNVLLLVESNEGDNSFSSKSIQLSLVSNWGETPSYLEAAEFLHNQDKSLFWKFIEEFNKIDFSTNYSDKIYYESTISLMKSVLSSNTQFLSEFLSIDLAMRTYSPRVETYRQLAISNMKLNNIEHSITTADNKTITLFNSGGWVQIKNKIITDVNEINESLFKDVAVVDDEENEFIRLYDFDHIFPTLANTVSSSSSSPSSIPIVILYVDIKSEFFKLVHPKLKQFSQMGKIKYCLRYVVQESNQKLNLQGYGYELSIKNLEYKVMDDSAIKKDIIIDGVKSKTIINIPNEDVQGFNFHKLQKRKPELTSKLSTFRSYLMAKSQEAKELKVWELKDLGIQSAQKIIQSGDPLRSLEYISQKFPTLSNSLSKITLNESLKSVIESNQKIIPSTTDQTLLLNGRLIDTNELSPIELSRIILEEYEHSTTIQQQGPLSSKTVQDIISAQLPIRIQLLPTKEELELNGGNEPFVSLNNLELDYIYRQWEPKLQSSVLDKPVTSPQDIFIRKNLLTTVIVLDWNNINTFEIIPEIQEMVQGNSLIPTRIQLLFNTKSNNNNNNNNNNNDQNSQTSNFIQGKDLAKVFLTIKNSNLGNRGAFFFITALNYFKKMYIPNELGITRSVLSSSFQAVLQQMGGSVRSLQHALTNTDFDNLLESSNQLIERLELLDTTTSQSTTTTTTTKILPKVFVNGVQVKYSNIDQLSFDLLVSLYDEFDNLKPLFKESILSTTTAQYYETILTSSYWKDNNLPFLKKLNSMISNEKYSHLITNSKNRNQEVDAQNVLKNLLYFRNNENKDEQNLLNLIVIGDFDHYNTRDISLELLRQLEKGELKNCKLTFISNPIDINSVVNTAGNENQILGKLITILKHYGKILTPQLVIGLFEKVQSDPTIIDSFKTMKQIIELSGFDIAANDIWVAQSVNLFKQSSKVCKQYLGIQSTNKSPLSILVNGRIITPPLSYDDAASFIQSDFKLLLEIEMIKAKKTFELLNSDPILKDKSNLKISDLLNKVQSLVGYYYNGNNQLDSNIKRKRIPNSLSISFSHKPPTLSSSSSSSSSNSNDVPLKFLMIINPFNKVSQKLVPMVREFSNKLNIPVDVILNPPVSLSELPLKTYYTYVIKLSSEFNNENVLYNQPLGIATDIPEDRVVTLALDIPSSWLVQPIIAKYDLDNIRLKDLGDEQVLTAVYELENIVIEGSANDMTTDNAPAGLELLLNPISTQTNKTQDTIVMNNFGYYQLKSNPGIWKLTIAPGRSSDIMDMVDHPNQKEKETFVIVPHRLVVIDSLYQSLSSLSVVRKAGQELRPILQPIDEYEKQKEQEKEQKLKQNSSGFFSNLFSSKNDATDSVATHQKKSNLDTIHIFSVASGHLYERFLKIMMLSVVKNTESPIKFWFLKNYLSPAFKEFIPEMAKEYGFQYELVTYKWPWWLRKQTEKQRIIWSYKILFLDVLFPLDVPKIIFVDADQVVRTDLKELWDMDLHGASLGYTPFCDSNKDTEGFRFWKSGYWRQHLAGRSYHISALYVVDLVRFRRLAAGDQLRATYDQLSRDPNSLANLDQDLPNYLQHYVRIHSLPQEWLWCETWCDQESKSKAKTIDLCNNPLTKTPKLENAVRIIDEWTTLDNEAKEFELKIDQSKHHRQIELDHQNQLPNSKPIENIDDILLNLAESQKDLF.

Positions 1-25 (MARIFKFFVFLLIVFISNVLLLVES) are cleaved as a signal peptide. 4 N-linked (GlcNAc...) asparagine glycosylation sites follow: N81, N148, N174, and N391. A disordered region spans residues 566–586 (TKSNNNNNNNNNNNDQNSQTS). Residues 569–579 (NNNNNNNNNNN) are compositionally biased toward low complexity. N-linked (GlcNAc...) asparagine glycosylation is found at N1233 and N1338. The segment at 1346 to 1657 (LFSSKNDATD…QIELDHQNQL (312 aa)) is glucosyltransferase.

The protein belongs to the glycosyltransferase 8 family. Ca(2+) serves as cofactor. The cofactor is Mn(2+).

The protein localises to the endoplasmic reticulum lumen. Its subcellular location is the endoplasmic reticulum-Golgi intermediate compartment. It functions in the pathway protein modification; protein glycosylation. Functionally, recognizes glycoproteins with minor folding defects. Reglucosylates single N-glycans near the misfolded part of the protein, thus providing quality control for protein folding in the endoplasmic reticulum. The protein is Probable UDP-glucose:glycoprotein glucosyltransferase A (ggtA) of Dictyostelium discoideum (Social amoeba).